The following is a 372-amino-acid chain: Chaperone protein DnaJ (372 aa).

Positions 5–70 (DYYEVLGVSK…QKRAAYDQYG (66 aa)) constitute a J domain. The segment at 127–205 (GVTKEIRIPT…CHGHGRVERY (79 aa)) adopts a CR-type zinc-finger fold. Positions 140, 143, 157, 160, 179, 182, 193, and 196 each coordinate Zn(2+). 4 CXXCXGXG motif repeats span residues 140-147 (CDICHGSG), 157-164 (CSTCQGAG), 179-186 (CPHCHGRG), and 193-200 (CHKCHGHG).

This sequence belongs to the DnaJ family. In terms of assembly, homodimer. The cofactor is Zn(2+).

It is found in the cytoplasm. Participates actively in the response to hyperosmotic and heat shock by preventing the aggregation of stress-denatured proteins and by disaggregating proteins, also in an autonomous, DnaK-independent fashion. Unfolded proteins bind initially to DnaJ; upon interaction with the DnaJ-bound protein, DnaK hydrolyzes its bound ATP, resulting in the formation of a stable complex. GrpE releases ADP from DnaK; ATP binding to DnaK triggers the release of the substrate protein, thus completing the reaction cycle. Several rounds of ATP-dependent interactions between DnaJ, DnaK and GrpE are required for fully efficient folding. Also involved, together with DnaK and GrpE, in the DNA replication of plasmids through activation of initiation proteins. This is Chaperone protein DnaJ from Photorhabdus laumondii subsp. laumondii (strain DSM 15139 / CIP 105565 / TT01) (Photorhabdus luminescens subsp. laumondii).